We begin with the raw amino-acid sequence, 365 residues long: DNA polymerase IV (365 aa).

The 185-residue stretch at 14-198 (IIHIDMDAFF…LPIEKFHGVG (185 aa)) folds into the UmuC domain. Mg(2+) is bound by residues Asp18 and Asp116. Glu117 is an active-site residue.

The protein belongs to the DNA polymerase type-Y family. Monomer. Mg(2+) is required as a cofactor.

Its subcellular location is the cytoplasm. It catalyses the reaction DNA(n) + a 2'-deoxyribonucleoside 5'-triphosphate = DNA(n+1) + diphosphate. Poorly processive, error-prone DNA polymerase involved in untargeted mutagenesis. Copies undamaged DNA at stalled replication forks, which arise in vivo from mismatched or misaligned primer ends. These misaligned primers can be extended by PolIV. Exhibits no 3'-5' exonuclease (proofreading) activity. May be involved in translesional synthesis, in conjunction with the beta clamp from PolIII. In Streptococcus pyogenes serotype M3 (strain ATCC BAA-595 / MGAS315), this protein is DNA polymerase IV.